The primary structure comprises 277 residues: Pantothenate synthetase (277 aa).

28–35 contacts ATP; it reads MGALHSGH. The active-site Proton donor is the H35. Position 59 (Q59) interacts with (R)-pantoate. Q59 serves as a coordination point for beta-alanine. ATP-binding positions include 145 to 148, V174, and 182 to 185; these read GEKD and LSSR.

The protein belongs to the pantothenate synthetase family. As to quaternary structure, homodimer.

It localises to the cytoplasm. It carries out the reaction (R)-pantoate + beta-alanine + ATP = (R)-pantothenate + AMP + diphosphate + H(+). The protein operates within cofactor biosynthesis; (R)-pantothenate biosynthesis; (R)-pantothenate from (R)-pantoate and beta-alanine: step 1/1. In terms of biological role, catalyzes the condensation of pantoate with beta-alanine in an ATP-dependent reaction via a pantoyl-adenylate intermediate. The protein is Pantothenate synthetase of Anaplasma marginale (strain St. Maries).